Here is a 524-residue protein sequence, read N- to C-terminus: Zinc finger protein GLIS2 (524 aa).

Residues 35–174 (ALHRELGLVD…PKQLVCRWAK (140 aa)) are interaction with CTNND1. 2 disordered regions span residues 39-62 (ELGL…FLLN) and 84-114 (SPPS…VPSA). Positions 71–137 (GRFSAAPLVD…SSFQFFLPLG (67 aa)) are transcription activation. A compositionally biased stretch (low complexity) spans 84-100 (SPPSGLDSPNGSSSLSP). Residues 148–171 (SFLTPPKDKCLSPDLPLPKQLVCR) are transcription repression. The C2H2-type 1 zinc finger occupies 168-193 (LVCRWAKCNQLFELLQDLVDHVNDYH). The C2H2-type 2; atypical zinc-finger motif lies at 202–229 (YCCHWEGCARHGRGFNARYKMLIHIRTH). 3 consecutive C2H2-type zinc fingers follow at residues 235–257 (HRCP…NRSH), 263–287 (YVCP…TRTH), and 293–317 (YYCK…IKAH). A disordered region spans residues 439-480 (GGKAEGEKGRGSVPTRALGMEGHKTPLERTESSCSRPSPDGL). Basic and acidic residues predominate over residues 459–469 (EGHKTPLERTE).

The protein belongs to the GLI C2H2-type zinc-finger protein family. In terms of assembly, interacts with CTBP1 and HDAC3. Interacts with CTNNB1. Interacts with SUFU. Interacts with CTNND1. Post-translationally, C-terminus cleavage is induced by interaction with CTNND1 and enhanced by Src tyrosine kinase. In terms of tissue distribution, expressed at high levels in kidney and at low levels in heart, lung and placenta. Expressed in colon.

It localises to the nucleus speckle. The protein localises to the cytoplasm. Functionally, can act either as a transcriptional repressor or as a transcriptional activator, depending on the cell context. Acts as a repressor of the Hedgehog signaling pathway. Represses the Hedgehog-dependent expression of Wnt4. Necessary to maintain the differentiated epithelial phenotype in renal cells through the inhibition of SNAI1, which itself induces the epithelial-to-mesenchymal transition. Represses transcriptional activation mediated by CTNNB1 in the Wnt signaling pathway. May act by recruiting the corepressors CTBP1 and HDAC3. May be involved in neuron differentiation. In Homo sapiens (Human), this protein is Zinc finger protein GLIS2 (GLIS2).